The following is a 495-amino-acid chain: tRNA modification GTPase MnmE (495 aa).

(6S)-5-formyl-5,6,7,8-tetrahydrofolate-binding residues include arginine 28, glutamate 89, and lysine 128. The region spanning 223 to 417 is the TrmE-type G domain; that stretch reads GVRIVLGGCP…LRAQTLHLLH (195 aa). K(+) is bound at residue asparagine 233. GTP contacts are provided by residues 233 to 238, 252 to 258, and 277 to 280; these read NAGKSS, SSVPGTT, and DTAG. Serine 237 lines the Mg(2+) pocket. The K(+) site is built by serine 252, valine 254, and threonine 257. Threonine 258 provides a ligand contact to Mg(2+). Residue lysine 495 participates in (6S)-5-formyl-5,6,7,8-tetrahydrofolate binding.

The protein belongs to the TRAFAC class TrmE-Era-EngA-EngB-Septin-like GTPase superfamily. TrmE GTPase family. Homodimer. Heterotetramer of two MnmE and two MnmG subunits. K(+) serves as cofactor.

It is found in the cytoplasm. In terms of biological role, exhibits a very high intrinsic GTPase hydrolysis rate. Involved in the addition of a carboxymethylaminomethyl (cmnm) group at the wobble position (U34) of certain tRNAs, forming tRNA-cmnm(5)s(2)U34. The polypeptide is tRNA modification GTPase MnmE (Treponema pallidum (strain Nichols)).